Consider the following 322-residue polypeptide: tRNA uridine(34) hydroxylase (322 aa).

Residues 125-219 (QQEDTIVVDA…YGKDPEVQGE (95 aa)) form the Rhodanese domain. The active-site Cysteine persulfide intermediate is the C179.

It belongs to the TrhO family.

The catalysed reaction is uridine(34) in tRNA + AH2 + O2 = 5-hydroxyuridine(34) in tRNA + A + H2O. Functionally, catalyzes oxygen-dependent 5-hydroxyuridine (ho5U) modification at position 34 in tRNAs. The polypeptide is tRNA uridine(34) hydroxylase (Bacillus licheniformis (strain ATCC 14580 / DSM 13 / JCM 2505 / CCUG 7422 / NBRC 12200 / NCIMB 9375 / NCTC 10341 / NRRL NRS-1264 / Gibson 46)).